The primary structure comprises 450 residues: Tubulin alpha-5 chain (450 aa).

Residues Gln11, Glu71, Gly144, Thr145, Thr179, Asn206, and Asn228 each coordinate GTP. Glu71 contacts Mg(2+). Glu254 is a catalytic residue.

It belongs to the tubulin family. In terms of assembly, dimer of alpha and beta chains. A typical microtubule is a hollow water-filled tube with an outer diameter of 25 nm and an inner diameter of 15 nM. Alpha-beta heterodimers associate head-to-tail to form protofilaments running lengthwise along the microtubule wall with the beta-tubulin subunit facing the microtubule plus end conferring a structural polarity. Microtubules usually have 13 protofilaments but different protofilament numbers can be found in some organisms and specialized cells. Mg(2+) is required as a cofactor. Undergoes a tyrosination/detyrosination cycle, the cyclic removal and re-addition of a C-terminal tyrosine residue by the enzymes tubulin tyrosine carboxypeptidase (TTCP) and tubulin tyrosine ligase (TTL), respectively.

Its subcellular location is the cytoplasm. The protein localises to the cytoskeleton. The catalysed reaction is GTP + H2O = GDP + phosphate + H(+). Tubulin is the major constituent of microtubules, a cylinder consisting of laterally associated linear protofilaments composed of alpha- and beta-tubulin heterodimers. Microtubules grow by the addition of GTP-tubulin dimers to the microtubule end, where a stabilizing cap forms. Below the cap, tubulin dimers are in GDP-bound state, owing to GTPase activity of alpha-tubulin. The polypeptide is Tubulin alpha-5 chain (TUBA5) (Zea mays (Maize)).